A 694-amino-acid chain; its full sequence is Acetyl-coenzyme A synthetase (694 aa).

Residues 1 to 23 form a disordered region; sequence MSDKRPRSPCSNNNDELNDSSVL. The span at 9–23 shows a compositional bias: polar residues; the sequence is PCSNNNDELNDSSVL. Residues 229–232 and threonine 347 contribute to the CoA site; that span reads RGKK. ATP-binding positions include 423–425, 447–452, aspartate 536, and arginine 551; these read GEP and DTYWQT. Serine 559 contributes to the CoA binding site. Arginine 562 serves as a coordination point for ATP. Arginine 628 contacts CoA.

The protein belongs to the ATP-dependent AMP-binding enzyme family.

It carries out the reaction acetate + ATP + CoA = acetyl-CoA + AMP + diphosphate. The polypeptide is Acetyl-coenzyme A synthetase (ACS) (Cryptosporidium parvum).